A 153-amino-acid chain; its full sequence is Coiled-coil domain-containing protein 182 (153 aa).

Positions 46 to 109 form a coiled coil; the sequence is ADLEILQQKV…RLREEEDRGI (64 aa).

This Homo sapiens (Human) protein is Coiled-coil domain-containing protein 182 (CCDC182).